A 122-amino-acid chain; its full sequence is Large ribosomal subunit protein uL14 (122 aa).

This sequence belongs to the universal ribosomal protein uL14 family. As to quaternary structure, part of the 50S ribosomal subunit. Forms a cluster with proteins L3 and L19. In the 70S ribosome, L14 and L19 interact and together make contacts with the 16S rRNA in bridges B5 and B8.

Functionally, binds to 23S rRNA. Forms part of two intersubunit bridges in the 70S ribosome. This Caldanaerobacter subterraneus subsp. tengcongensis (strain DSM 15242 / JCM 11007 / NBRC 100824 / MB4) (Thermoanaerobacter tengcongensis) protein is Large ribosomal subunit protein uL14.